We begin with the raw amino-acid sequence, 575 residues long: uncharacterized protein (575 aa).

The N-terminal stretch at 1–28 is a signal peptide; that stretch reads MSNLLWKSLVVSPAVLGATLLVSSAAIA. Residues 87-151 enclose the SLH domain; sequence SVSQFSDVQP…DRVNELIATA (65 aa). Residues 158–196 adopt a coiled-coil conformation; that stretch reads KQDLATLQRLQEEFSAELATLRGRVDALEARTAELEANQ.

It belongs to the OprB family.

This is an uncharacterized protein from Nostoc sp. (strain PCC 7120 / SAG 25.82 / UTEX 2576).